Consider the following 529-residue polypeptide: GTPase Obg (529 aa).

Residues 2 to 159 (ASFVDRVVLH…SDIVLELKSI (158 aa)) enclose the Obg domain. Residues 160-343 (ADIALVGFPS…LGFAMAEIVK (184 aa)) enclose the OBG-type G domain. Residues 166 to 173 (GFPSAGKS), 191 to 195 (FTTLI), 212 to 215 (DVPG), 295 to 298 (NKVD), and 324 to 326 (SAT) each bind GTP. Mg(2+) is bound by residues Ser-173 and Thr-193. The OCT domain occupies 363–447 (PRAVNEAGFK…DDGVVFDWEP (85 aa)). Positions 466–502 (FADIGDRPTRGQKRDEQQERRDAKAAARAELEAERKA) are enriched in basic and acidic residues. The interval 466 to 529 (FADIGDRPTR…ESGLTTENEE (64 aa)) is disordered.

Belongs to the TRAFAC class OBG-HflX-like GTPase superfamily. OBG GTPase family. As to quaternary structure, monomer. Requires Mg(2+) as cofactor.

Its subcellular location is the cytoplasm. An essential GTPase which binds GTP, GDP and possibly (p)ppGpp with moderate affinity, with high nucleotide exchange rates and a fairly low GTP hydrolysis rate. Plays a role in control of the cell cycle, stress response, ribosome biogenesis and in those bacteria that undergo differentiation, in morphogenesis control. The protein is GTPase Obg of Arthrobacter sp. (strain FB24).